A 318-amino-acid polypeptide reads, in one-letter code: Tyrosine--tRNA ligase (318 aa).

Y35 contributes to the L-tyrosine binding site. The 'HIGH' region motif lies at P40–H48. Residues Y154, Q158, D161, and Q176 each coordinate L-tyrosine. Positions K211–S215 match the 'KMSKS' region motif. S214 provides a ligand contact to ATP.

Belongs to the class-I aminoacyl-tRNA synthetase family. TyrS type 3 subfamily. In terms of assembly, homodimer.

The protein resides in the cytoplasm. It carries out the reaction tRNA(Tyr) + L-tyrosine + ATP = L-tyrosyl-tRNA(Tyr) + AMP + diphosphate + H(+). Catalyzes the attachment of tyrosine to tRNA(Tyr) in a two-step reaction: tyrosine is first activated by ATP to form Tyr-AMP and then transferred to the acceptor end of tRNA(Tyr). The protein is Tyrosine--tRNA ligase of Methanosphaera stadtmanae (strain ATCC 43021 / DSM 3091 / JCM 11832 / MCB-3).